The following is a 692-amino-acid chain: Protein artemis (692 aa).

Position 380 is a phosphothreonine (Thr-380). Position 385 is a phosphoserine (Ser-385). Disordered regions lie at residues 503-555 and 640-660; these read RLEN…DSQS and STNA…PEAE. Residues 507-520 show a composition bias toward polar residues; sequence FPSSTEAGGSQSPK. Residues 530–543 are compositionally biased toward low complexity; that stretch reads THISSQNSSQSTHI. Polar residues-rich tracts occupy residues 544–555 and 640–650; these read TEQGSQGWDSQS and STNADSQSSSD. Ser-645 bears the Phosphoserine; by ATM mark.

It belongs to the DNA repair metallo-beta-lactamase (DRMBL) family. Interacts with LIG4; the interaction is direct. Interacts with ATM. Interacts with BRCA1. Interacts with PRKDC. Interacts with TP53BP1. Also exhibits ATM- and phosphorylation-dependent interaction with the MRN complex, composed of MRE11, RAD50, and NBN. Phosphorylation on undefined residues by PRKDC may stimulate endonucleolytic activity on 5' and 3' hairpins and overhangs. PRKDC must remain present, even after phosphorylation, for efficient hairpin opening. Also phosphorylated by ATM in response to ionizing radiation (IR) and by ATR in response to ultraviolet (UV) radiation.

The protein resides in the nucleus. Required for V(D)J recombination, the process by which exons encoding the antigen-binding domains of immunoglobulins and T-cell receptor proteins are assembled from individual V, (D), and J gene segments. V(D)J recombination is initiated by the lymphoid specific RAG endonuclease complex, which generates site specific DNA double strand breaks (DSBs). These DSBs present two types of DNA end structures: hairpin sealed coding ends and phosphorylated blunt signal ends. These ends are independently repaired by the non homologous end joining (NHEJ) pathway to form coding and signal joints respectively. This protein exhibits single-strand specific 5'-3' exonuclease activity in isolation, and acquires endonucleolytic activity on 5' and 3' hairpins and overhangs when in a complex with PRKDC. The latter activity is required specifically for the resolution of closed hairpins prior to the formation of the coding joint. May also be required for the repair of complex DSBs induced by ionizing radiation, which require substantial end-processing prior to religation by NHEJ. In Pongo abelii (Sumatran orangutan), this protein is Protein artemis (DCLRE1C).